A 173-amino-acid polypeptide reads, in one-letter code: Calcium-binding protein 5 (173 aa).

EF-hand domains lie at D28–M63, G82–A99, I105–D140, and L142–R173. The Ca(2+) site is built by D41, D43, D45, and D52. 10 residues coordinate Ca(2+): D118, N120, D122, E124, E129, D155, N157, D159, T161, and E166.

As to quaternary structure, interacts with CACNA1C (via C-terminal CDB motif) in a calcium-dependent manner. Interacts with STXBP1. Interacts with MYO6. In terms of tissue distribution, expressed in the retina (at protein level).

Its subcellular location is the cytoplasm. Its function is as follows. Inhibits calcium-dependent inactivation of L-type calcium channel and shifts voltage dependence of activation to more depolarized membrane potentials. Involved in the transmission of light signals. May positively regulate neurotransmitter vesicle endocytosis and exocytosis in a salt-dependent manner. May play a role in the extension and network organization of neurites. The sequence is that of Calcium-binding protein 5 (CABP5) from Bos taurus (Bovine).